Here is a 444-residue protein sequence, read N- to C-terminus: MSEMTPREIVKELDRFIIGQKKAKRAVAIALRNRWRRMKLNKELRYEITPKNILMIGPTGVGKTEIARRLAKLAKAPFIKVEATKFTEIGYVGKEVDSIIRDLTDSAIKMIKSTAIKKNKKRAKELAEERILDVLVPTIKNNWKKTNTNNNSEATLQIFRKKLREGTLDDKEIEINVAVTPMGIEIMAPPGMEELTNQLQSLFQNLTGNKRNIKKLKIKDAMKLLIEEEAAKLINLEELKKEAIYAVEQHGIVFIDEIDKICRNHGSSGPDISREGVQRDLLPLIEGCTVSTKHGMVKTDHILFIASGAFQVSTPSDLIPELQGRLPIRVELQALTINDFELILTEPKASVTMQYQALLKTEKVKINFTKEGIRHIAEAAWKVNESMENIGARRLHTVLERLMEDISFHASDHRNEITITIDEKYVQKHLDKLISNEDLSRFIL.

ATP contacts are provided by residues isoleucine 18, glycine 60–glutamate 65, aspartate 256, glutamate 321, and arginine 393.

This sequence belongs to the ClpX chaperone family. HslU subfamily. As to quaternary structure, a double ring-shaped homohexamer of HslV is capped on each side by a ring-shaped HslU homohexamer. The assembly of the HslU/HslV complex is dependent on binding of ATP.

The protein localises to the cytoplasm. Functionally, ATPase subunit of a proteasome-like degradation complex; this subunit has chaperone activity. The binding of ATP and its subsequent hydrolysis by HslU are essential for unfolding of protein substrates subsequently hydrolyzed by HslV. HslU recognizes the N-terminal part of its protein substrates and unfolds these before they are guided to HslV for hydrolysis. This chain is ATP-dependent protease ATPase subunit HslU, found in Buchnera aphidicola subsp. Baizongia pistaciae (strain Bp).